The chain runs to 508 residues: Photosystem II CP47 reaction center protein (508 aa).

6 helical membrane-spanning segments follow: residues 21-36 (SVHI…WAGS), 101-115 (IVFS…IWHW), 140-156 (GIHL…FGAF), 203-218 (IAAG…FHLS), 237-252 (VLSS…AFVV), and 457-472 (SFAL…HGAR).

The protein belongs to the PsbB/PsbC family. PsbB subfamily. PSII is composed of 1 copy each of membrane proteins PsbA, PsbB, PsbC, PsbD, PsbE, PsbF, PsbH, PsbI, PsbJ, PsbK, PsbL, PsbM, PsbT, PsbX, PsbY, PsbZ, Psb30/Ycf12, at least 3 peripheral proteins of the oxygen-evolving complex and a large number of cofactors. It forms dimeric complexes. Requires Binds multiple chlorophylls. PSII binds additional chlorophylls, carotenoids and specific lipids. as cofactor.

It is found in the plastid. The protein localises to the chloroplast thylakoid membrane. Its function is as follows. One of the components of the core complex of photosystem II (PSII). It binds chlorophyll and helps catalyze the primary light-induced photochemical processes of PSII. PSII is a light-driven water:plastoquinone oxidoreductase, using light energy to abstract electrons from H(2)O, generating O(2) and a proton gradient subsequently used for ATP formation. This Dioscorea elephantipes (Elephant's foot yam) protein is Photosystem II CP47 reaction center protein.